Consider the following 278-residue polypeptide: Probable CCR4-associated factor 1 homolog 5 (278 aa).

A divalent metal cation is bound by residues Asp30, Glu32, Asp145, and Asp217.

The protein belongs to the CAF1 family. As to quaternary structure, component of the CCR4-NOT complex, at least composed of CRR4 and CAF1 proteins. Requires a divalent metal cation as cofactor.

The protein resides in the nucleus. Its subcellular location is the cytoplasm. The enzyme catalyses Exonucleolytic cleavage of poly(A) to 5'-AMP.. Its function is as follows. Ubiquitous transcription factor required for a diverse set of processes. It is a component of the CCR4 complex involved in the control of gene expression. The sequence is that of Probable CCR4-associated factor 1 homolog 5 (CAF1-5) from Arabidopsis thaliana (Mouse-ear cress).